Reading from the N-terminus, the 379-residue chain is Polycomb group protein FIE2 (379 aa).

WD repeat units lie at residues 85–128 (DKDE…LAKS), 131–171 (GHGD…CILI), 177–217 (GHRN…LYVD), 243–280 (VHSN…QSPG), 292–333 (VPEC…PVLI), and 340–378 (QCKS…PSSR).

Belongs to the WD repeat ESC family. In terms of tissue distribution, widely expressed. Expressed in the embryo sac before pollination. After pollination, its expression persists, predominantly in the embryo and at lower levels in the endosperm.

It is found in the nucleus. In terms of biological role, polycomb group (PcG) protein. PcG proteins act by forming multiprotein complexes, which are required to maintain the transcriptionally repressive state of homeotic genes throughout development. PcG proteins are not required to initiate repression, but to maintain it during later stages of development. They probably act via the methylation of histones, rendering chromatin heritably changed in its expressibility. The sequence is that of Polycomb group protein FIE2 (FIE2) from Zea mays (Maize).